A 394-amino-acid polypeptide reads, in one-letter code: S-adenosylmethionine synthase 3 (394 aa).

E11 provides a ligand contact to Mg(2+). H17 is an ATP binding site. Residue E45 coordinates K(+). Residues E58 and Q101 each contribute to the L-methionine site. Residues 169–171 (DGK), 237–240 (SGRF), D248, 254–255 (RK), A271, K275, and K279 each bind ATP. D248 is a binding site for L-methionine. K279 contacts L-methionine.

Belongs to the AdoMet synthase family. Homotetramer. Mn(2+) is required as a cofactor. The cofactor is Mg(2+). It depends on Co(2+) as a cofactor. Requires K(+) as cofactor.

Its subcellular location is the cytoplasm. It carries out the reaction L-methionine + ATP + H2O = S-adenosyl-L-methionine + phosphate + diphosphate. Its pathway is amino-acid biosynthesis; S-adenosyl-L-methionine biosynthesis; S-adenosyl-L-methionine from L-methionine: step 1/1. Its function is as follows. Catalyzes the formation of S-adenosylmethionine from methionine and ATP. The reaction comprises two steps that are both catalyzed by the same enzyme: formation of S-adenosylmethionine (AdoMet) and triphosphate, and subsequent hydrolysis of the triphosphate. This is S-adenosylmethionine synthase 3 (SAM3) from Hordeum vulgare (Barley).